The following is a 660-amino-acid chain: MNINLDSAKDTFCKNVLIYGYCKYENKGCAFSHTVKPTSSVPGSQGSNATTNSSGNTNADMKKKFNFNTPSFQPSTVPNLTNKFSNLSPNLKEIPVFVPSGGMSNADSGGMNEPEMNDSVTPNKKFNASTPSFMPSNPYISNNDQISAPSPVMAQSVSTPGAKANGNIQHNPYLPGNAGTPQPTSAVAAPNSADVFFQQPTSSYPLQHHLYAPAPPPRLTIPLPPHEINVNSMFIPNDLRETLLKRNEATLQTLPRSNLPDHVNIYHSLVPIDTSFENISKVYELPSFVYKVFSNVDGNPYALRKIDIQSVLRITNELPFKYIKKWKSVKCANIVQLQEAFTSMAFGGSYSSLIVTYDYFPNSNTLQEQHISRRLGGKLEPITEELLWNYVIEITNALINIHENNLAARSALHLSKILVTNKNRVRLGGVGISDILNYEDDEEQIQQKGLDAFRHELQQADIKKFGKLILDLAALCLPNNARNHEPKDLISLLKTSTTVNFSGEFINLLTELNMNTSDLQEFNRNHLSRRILNFCSNAQDSQDFMESQLSTELENARVFRLITKLNFIIDRPEYDNDPNWQENGNKYIIKLFRDYIFFQYDEFGKPVCDLSRVLTNLNKLDAGIDEKFLLVNKDEKNCIIVSYKEIRDIIDSAFRTLTRG.

The C3H1-type zinc-finger motif lies at 7-36 (SAKDTFCKNVLIYGYCKYENKGCAFSHTVK). 2 disordered regions span residues 36-60 (KPTSSVPGSQGSNATTNSSGNTNAD) and 150-186 (SPVMAQSVSTPGAKANGNIQHNPYLPGNAGTPQPTSA). A compositionally biased stretch (low complexity) spans 43-59 (GSQGSNATTNSSGNTNA). The short motif at 59–79 (ADMKKKFNFNTPSFQPSTVPN) is the PABPC-interacting motif-2 (PAM-2) element. Polar residues predominate over residues 150–159 (SPVMAQSVST). Residues 252 to 528 (QTLPRSNLPD…LQEFNRNHLS (277 aa)) form a pseudokinase domain region. ATP-binding positions include Arg-304, 358–365 (DYFPNSNT), and 415–416 (SK). A coiled-coil region spans residues 529 to 567 (RRILNFCSNAQDSQDFMESQLSTELENARVFRLITKLNF). Positions 568–660 (IIDRPEYDND…DSAFRTLTRG (93 aa)) are knob domain.

Belongs to the protein kinase superfamily. PAN3 family. As to quaternary structure, homodimer. Forms a heterotrimer with a catalytic subunit PAN2 to form the poly(A)-nuclease (PAN) deadenylation complex. Interacts (via PAM-2 motif) with poly(A)-binding protein PAB1 (via PABC domain), conferring substrate specificity of the enzyme complex.

The protein localises to the cytoplasm. Regulatory subunit of the poly(A)-nuclease (PAN) deadenylation complex, one of two cytoplasmic mRNA deadenylases involved in mRNA turnover. PAN specifically shortens poly(A) tails of RNA and the activity is stimulated by poly(A)-binding protein PAB1. PAN deadenylation is followed by rapid degradation of the shortened mRNA tails by the CCR4-NOT complex. Deadenylated mRNAs are then degraded by two alternative mechanisms, namely exosome-mediated 3'-5' exonucleolytic degradation, or deadenylation-dependent mRNA decaping and subsequent 5'-3' exonucleolytic degradation by XRN1. May also be involved in post-transcriptional maturation of mRNA poly(A) tails. PAN3 acts as a positive regulator for PAN activity, recruiting the catalytic subunit PAN2 to mRNA via its interaction with RNA and with PAB1. This Debaryomyces hansenii (strain ATCC 36239 / CBS 767 / BCRC 21394 / JCM 1990 / NBRC 0083 / IGC 2968) (Yeast) protein is PAN2-PAN3 deadenylation complex subunit PAN3.